Reading from the N-terminus, the 312-residue chain is Small ribosomal subunit protein RACK1 (312 aa).

WD repeat units lie at residues 9–42 (GHRGWVTSLACPQQAGSYIKVVSTSRDGTVISWK), 63–93 (GHTGFVSCVSLAHATDYALTASWDRSIRMWD), 105–135 (KHTKDVLAVAFSPDDRLIVSAGRDNVIRVWN), 148–180 (GHEDWVSSICFSPSLEHPIVVSGSWDNTIKVWN), 192–222 (GHSNYVSTVTVSPDGSLCASGGKDGAALLWD), 233–262 (NVESPINQIGFSPNRFWMCVATERSLSVYD), and 279–307 (PSECISIAWSADGNTLYSGHKDNLIRVWS).

The protein belongs to the WD repeat G protein beta family. Ribosomal protein RACK1 subfamily.

The chain is Small ribosomal subunit protein RACK1 from Leishmania major.